We begin with the raw amino-acid sequence, 205 residues long: Protein N-terminal glutamine amidohydrolase (205 aa).

Active-site residues include C20, H74, and D90.

Belongs to the NTAQ1 family. As to quaternary structure, monomer.

It carries out the reaction N-terminal L-glutaminyl-[protein] + H2O = N-terminal L-glutamyl-[protein] + NH4(+). In terms of biological role, mediates the side-chain deamidation of N-terminal glutamine residues to glutamate, an important step in N-end rule pathway of protein degradation. Conversion of the resulting N-terminal glutamine to glutamate renders the protein susceptible to arginylation, polyubiquitination and degradation as specified by the N-end rule. Does not act on substrates with internal or C-terminal glutamine and does not act on non-glutamine residues in any position. The sequence is that of Protein N-terminal glutamine amidohydrolase (tun) from Drosophila grimshawi (Hawaiian fruit fly).